Here is a 664-residue protein sequence, read N- to C-terminus: Macoilin (664 aa).

4 helical membrane-spanning segments follow: residues T28 to L48, A75 to I95, V120 to F140, and F154 to V174. Over residues R253–K265 the composition is skewed to basic and acidic residues. Residues R253–N274 form a disordered region. Position 305 is a phosphoserine (S305). Polar residues predominate over residues K320–S348. The tract at residues K320 to L367 is disordered. N324 is a glycosylation site (N-linked (GlcNAc...) asparagine). A Phosphoserine modification is found at S332. N-linked (GlcNAc...) asparagine glycosylation is found at N340 and N452. Residues S631 and S634 each carry the phosphoserine modification. The disordered stretch occupies residues S631–K664. An N-linked (GlcNAc...) asparagine glycan is attached at N655.

Belongs to the macoilin family.

The protein localises to the rough endoplasmic reticulum membrane. It is found in the nucleus membrane. In terms of biological role, plays a role in the regulation of neuronal activity. This Bos taurus (Bovine) protein is Macoilin (MACO1).